The chain runs to 138 residues: Hydrogenase maturation factor HypA (138 aa).

Histidine 2 contributes to the Ni(2+) binding site. Zn(2+) is bound by residues cysteine 73, cysteine 76, cysteine 110, and cysteine 113.

Belongs to the HypA/HybF family.

In terms of biological role, involved in the maturation of [NiFe] hydrogenases. Required for nickel insertion into the metal center of the hydrogenase. This Thermococcus sibiricus (strain DSM 12597 / MM 739) protein is Hydrogenase maturation factor HypA.